The sequence spans 79 residues: Peptide Im-5 (79 aa).

The signal sequence occupies residues 1-23 (MKYRKQLLVLFFAYFLVVNESEA). A propeptide spanning residues 49 to 79 (RALMKRDLQDRMDPYQRNLKLDRYLKQLALD) is cleaved from the precursor.

This sequence belongs to the non-disulfide-bridged peptide (NDBP) superfamily. Medium-length antimicrobial peptide (group 3) family. Expressed by the venom gland.

The protein resides in the secreted. It localises to the target cell membrane. Functionally, antimicrobial peptide that may act by disrupting the integrity of the bacterial cell membrane. Has antibacterial activity against Gram-negative bacterium E.coli NBRC 3972 (MIC=10 uM) and against Gram-positive bacteria S.aureus NBRC 13276 (MIC=2.5-5 uM) and B.subtilis NBRC 3009 (MIC=0.5-1 uM). Also shows potent activity against antibiotic-sensitive and -resistant Acinetobacter baumannii (MIC=1.8-3.6 uM). Shows cytolytic activity against human and sheep erythrocytes. Toxic to cricket A.domestica. The chain is Peptide Im-5 from Isometrus maculatus (Lesser brown scorpion).